A 249-amino-acid chain; its full sequence is Meiotic drive suppressor wtf25 (249 aa).

A disordered region spans residues 1 to 40; sequence MKNNYTSLKSPLDEEDELKTDHEIDLEKGPLPEYDSEEEG. A compositionally biased stretch (basic and acidic residues) spans 19-30; it reads KTDHEIDLEKGP. The next 4 helical transmembrane spans lie at 73-93, 110-130, 151-170, and 187-207; these read LLIILLISFTSIILFNAPAFC, WTLFGFWCLVCTLALIFLTYF, NMIFAFCKSSLFCLVLLKAE, and SASAFTFMAVSSILIFIAETV.

Belongs to the WTF family. Homomer. Interacts with other proteins that exhibit high sequence similarity.

It is found in the spore membrane. The protein localises to the vacuole membrane. Its function is as follows. Acts as a suppressor component of the dual wtf meiotic drive system, and can suppress but not confer meiotic drive by compatible poisons. Wtf meiotic drive systems promote unequal transmission of alleles from the parental zygote to progeny spores by encoding a poison and an antidote from the same locus; the poison is trans-acting and forms toxic aggregates in all spores within an ascus, wherease the antidote is spore-specific and targets aggregates for degradation by the vacuole. Meiotic drive by wtf systems therefore lead to poisoning of all progeny that do not inherit the dual poison/antidote allele, or express a compatible antidote. The protein is Meiotic drive suppressor wtf25 of Schizosaccharomyces pombe (strain 972 / ATCC 24843) (Fission yeast).